A 223-amino-acid polypeptide reads, in one-letter code: MKQEKTPSAITENKLPFSSSNCGCGCHNDDDTLTHDDGLLTDNLESAVYTMLQNVGEDPQREGLLKTPERVARSMRFLTKGYHENPEELLQKALFTESYDEMVLVRDIDLFSMCEHHMLPFFGKAHVAYIPDGKIVGLSKLARVVEVFSRRLQVQERLTQQIRDAIQNVLNPKGVAVVIEAKHLCMVMRGVEKLNSITTTSAMSGVFMTSPSTRGEFLRLIQK.

The Zn(2+) site is built by C114, H117, and C185.

It belongs to the GTP cyclohydrolase I family. Homomer.

The catalysed reaction is GTP + H2O = 7,8-dihydroneopterin 3'-triphosphate + formate + H(+). It participates in cofactor biosynthesis; 7,8-dihydroneopterin triphosphate biosynthesis; 7,8-dihydroneopterin triphosphate from GTP: step 1/1. This is GTP cyclohydrolase 1 from Chlorobium chlorochromatii (strain CaD3).